The primary structure comprises 100 residues: Urease subunit gamma (100 aa).

Belongs to the urease gamma subunit family. In terms of assembly, heterotrimer of UreA (gamma), UreB (beta) and UreC (alpha) subunits. Three heterotrimers associate to form the active enzyme.

The protein localises to the cytoplasm. The enzyme catalyses urea + 2 H2O + H(+) = hydrogencarbonate + 2 NH4(+). Its pathway is nitrogen metabolism; urea degradation; CO(2) and NH(3) from urea (urease route): step 1/1. The sequence is that of Urease subunit gamma from Burkholderia orbicola (strain MC0-3).